The following is a 368-amino-acid chain: Protein-glutamate methylesterase/protein-glutamine glutaminase 2 (368 aa).

A Response regulatory domain is found at 6–123; sequence KVLLVDDSAV…KEYLESAAGE (118 aa). Asp-57 is modified (4-aspartylphosphate). The CheB-type methylesterase domain occupies 169–355; sequence IAGANKIAAL…SLERIPQCVL (187 aa). Active-site residues include Ser-181, His-207, and Asp-303.

This sequence belongs to the CheB family. Phosphorylated by CheA. Phosphorylation of the N-terminal regulatory domain activates the methylesterase activity.

Its subcellular location is the cytoplasm. It carries out the reaction [protein]-L-glutamate 5-O-methyl ester + H2O = L-glutamyl-[protein] + methanol + H(+). It catalyses the reaction L-glutaminyl-[protein] + H2O = L-glutamyl-[protein] + NH4(+). In terms of biological role, involved in chemotaxis. Part of a chemotaxis signal transduction system that modulates chemotaxis in response to various stimuli. Catalyzes the demethylation of specific methylglutamate residues introduced into the chemoreceptors (methyl-accepting chemotaxis proteins or MCP) by CheR. Also mediates the irreversible deamidation of specific glutamine residues to glutamic acid. This chain is Protein-glutamate methylesterase/protein-glutamine glutaminase 2, found in Hahella chejuensis (strain KCTC 2396).